The chain runs to 130 residues: Lysozyme C (130 aa).

A C-type lysozyme domain is found at 2–130; it reads KVYGRCELAA…VNVWIRGCRL (129 aa). Cystine bridges form between cysteine 7–cysteine 128, cysteine 31–cysteine 116, cysteine 65–cysteine 81, and cysteine 77–cysteine 95. Catalysis depends on residues glutamate 36 and aspartate 53.

The protein belongs to the glycosyl hydrolase 22 family. Monomer.

Its subcellular location is the secreted. It carries out the reaction Hydrolysis of (1-&gt;4)-beta-linkages between N-acetylmuramic acid and N-acetyl-D-glucosamine residues in a peptidoglycan and between N-acetyl-D-glucosamine residues in chitodextrins.. Its function is as follows. Lysozymes have primarily a bacteriolytic function; those in tissues and body fluids are associated with the monocyte-macrophage system and enhance the activity of immunoagents. The polypeptide is Lysozyme C (LYZ) (Phasianus versicolor (Green pheasant)).